The following is a 704-amino-acid chain: SH3KBP1-binding protein 1 (704 aa).

Position 2 is an N-acetylalanine (A2). Positions 19–88 (EVIHLNVGGK…LRTKELDPRG (70 aa)) constitute a BTB domain. Residues 145–165 (LVGPQQAGGRPAPVRRSNTMP) are disordered. T163 bears the Phosphothreonine mark. WD repeat units follow at residues 233-280 (RLDW…GGSE), 283-322 (VFHL…WQVQ), 324-359 (VQPI…LRMK), 428-466 (VHRS…GMIS), and 548-586 (LECE…DGLG). The span at 611-644 (ASSRGSLPSPSPRTSLTSLHSAFSNTSLSSRRGS) shows a compositional bias: low complexity. The disordered stretch occupies residues 611–704 (ASSRGSLPSP…PKTKLNETSF (94 aa)). The short motif at 618 to 623 (PSPSPR) is the PXXXPR element. A phosphoserine mark is found at S644 and S646. The PXXXPR motif lies at 678-683 (PTPAPR).

This sequence belongs to the KCTD3 family. Monomer. Interacts with CUL3; interaction is direct and forms a 5:5 heterodecamer. Interacts (via PXXXPR motifs) with SH3KBP1 (via SH3 domains). Directly interacts with cathepsin B/CTSB.

The protein localises to the lysosome. In terms of biological role, inhibits CBL-SH3KBP1 complex mediated down-regulation of EGFR signaling by sequestration of SH3KBP1. Binds to SH3KBP1 and prevents its interaction with CBL and inhibits translocation of SH3KBP1 to EGFR containing vesicles upon EGF stimulation. This Bos taurus (Bovine) protein is SH3KBP1-binding protein 1 (SHKBP1).